A 303-amino-acid polypeptide reads, in one-letter code: MTNNKFKSGFVAILGRPNVGKSTFMNHVMGQKIAIMSDKPQTTRNKIQGIYTTENEQIVFIDTPGIHKPHNALGDFMVQSAYSTLRECDVVLFMVAADEPRSTGENMIIERLKKAEVPVILVVNKIDKIHPDRLFEIVADYTSQMEFSEVVPISAKQGNNTERLIDTLSEKLDEGPQYFPEDQITDHPERFLVSEMIREKILLLTREEVPHSIAVTTDQMTRDEETGKIHIMATIIVERKSQKGIILGKGGDMIRKIGKMARRDIEIMLGDKVYLETWVKIKNDWRDRKMDLADFGYNRDDYM.

In terms of domain architecture, Era-type G spans 7–174 (KSGFVAILGR…IDTLSEKLDE (168 aa)). Residues 15 to 22 (GRPNVGKS) are G1. 15–22 (GRPNVGKS) provides a ligand contact to GTP. A G2 region spans residues 41-45 (QTTRN). The segment at 62-65 (DTPG) is G3. GTP is bound by residues 62-66 (DTPGI) and 124-127 (NKID). Positions 124–127 (NKID) are G4. The tract at residues 153 to 155 (ISA) is G5. The region spanning 205 to 283 (TREEVPHSIA…YLETWVKIKN (79 aa)) is the KH type-2 domain.

This sequence belongs to the TRAFAC class TrmE-Era-EngA-EngB-Septin-like GTPase superfamily. Era GTPase family. Monomer.

The protein localises to the cytoplasm. It is found in the cell membrane. An essential GTPase that binds both GDP and GTP, with rapid nucleotide exchange. Plays a role in 16S rRNA processing and 30S ribosomal subunit biogenesis and possibly also in cell cycle regulation and energy metabolism. The chain is GTPase Era from Lactococcus lactis subsp. lactis (strain IL1403) (Streptococcus lactis).